A 232-amino-acid chain; its full sequence is dTTP/UTP pyrophosphatase (232 aa).

Catalysis depends on aspartate 103, which acts as the Proton acceptor.

It belongs to the Maf family. YhdE subfamily. The cofactor is a divalent metal cation.

The protein localises to the cytoplasm. It catalyses the reaction dTTP + H2O = dTMP + diphosphate + H(+). The catalysed reaction is UTP + H2O = UMP + diphosphate + H(+). Nucleoside triphosphate pyrophosphatase that hydrolyzes dTTP and UTP. May have a dual role in cell division arrest and in preventing the incorporation of modified nucleotides into cellular nucleic acids. This chain is dTTP/UTP pyrophosphatase, found in Bartonella henselae (strain ATCC 49882 / DSM 28221 / CCUG 30454 / Houston 1) (Rochalimaea henselae).